Consider the following 59-residue polypeptide: uncharacterized protein (59 aa).

The helical transmembrane segment at leucine 7–valine 27 threads the bilayer.

It localises to the membrane. This is an uncharacterized protein from Pyrobaculum aerophilum (strain ATCC 51768 / DSM 7523 / JCM 9630 / CIP 104966 / NBRC 100827 / IM2).